The chain runs to 492 residues: Cysteine--tRNA ligase (492 aa).

Cys-35 serves as a coordination point for Zn(2+). The 'HIGH' region signature appears at 37-47 (PTVYSNVHLGN). Cys-230, His-255, and Glu-259 together coordinate Zn(2+). The 'KMSKS' region signature appears at 287–291 (KMAKS). Lys-290 is an ATP binding site.

Belongs to the class-I aminoacyl-tRNA synthetase family. Monomer. Zn(2+) serves as cofactor.

The protein localises to the cytoplasm. It carries out the reaction tRNA(Cys) + L-cysteine + ATP = L-cysteinyl-tRNA(Cys) + AMP + diphosphate. The chain is Cysteine--tRNA ligase from Flavobacterium johnsoniae (strain ATCC 17061 / DSM 2064 / JCM 8514 / BCRC 14874 / CCUG 350202 / NBRC 14942 / NCIMB 11054 / UW101) (Cytophaga johnsonae).